The following is a 121-amino-acid chain: Large ribosomal subunit protein uL22c (121 aa).

Belongs to the universal ribosomal protein uL22 family. In terms of assembly, part of the 50S ribosomal subunit.

The protein resides in the plastid. It is found in the chloroplast. Its function is as follows. This protein binds specifically to 23S rRNA. Functionally, the globular domain of the protein is located near the polypeptide exit tunnel on the outside of the subunit, while an extended beta-hairpin is found that lines the wall of the exit tunnel in the center of the 70S ribosome. In Welwitschia mirabilis (Tree tumbo), this protein is Large ribosomal subunit protein uL22c (rpl22).